The chain runs to 157 residues: Phosphopantetheine adenylyltransferase (157 aa).

Thr-10 lines the substrate pocket. ATP is bound by residues 10–11 (TF) and His-18. Substrate contacts are provided by Lys-42, Leu-74, and Arg-88. Residues 89 to 91 (GLR), Glu-99, and 124 to 130 (NAFISSS) each bind ATP.

It belongs to the bacterial CoaD family. Homohexamer. Requires Mg(2+) as cofactor.

It is found in the cytoplasm. It catalyses the reaction (R)-4'-phosphopantetheine + ATP + H(+) = 3'-dephospho-CoA + diphosphate. It participates in cofactor biosynthesis; coenzyme A biosynthesis; CoA from (R)-pantothenate: step 4/5. Its function is as follows. Reversibly transfers an adenylyl group from ATP to 4'-phosphopantetheine, yielding dephospho-CoA (dPCoA) and pyrophosphate. This chain is Phosphopantetheine adenylyltransferase, found in Helicobacter pylori (strain Shi470).